The chain runs to 187 residues: Large ribosomal subunit protein uL6c (187 aa).

The protein belongs to the universal ribosomal protein uL6 family. In terms of assembly, part of the 50S ribosomal subunit.

It localises to the plastid. The protein resides in the chloroplast. In terms of biological role, binds 23S rRNA. The protein is Large ribosomal subunit protein uL6c (rpl6) of Thalassiosira pseudonana (Marine diatom).